A 420-amino-acid chain; its full sequence is tRNA(Ile)-lysidine synthase (420 aa).

ATP is bound at residue 28–33 (SGGLDS).

It belongs to the tRNA(Ile)-lysidine synthase family.

It is found in the cytoplasm. The catalysed reaction is cytidine(34) in tRNA(Ile2) + L-lysine + ATP = lysidine(34) in tRNA(Ile2) + AMP + diphosphate + H(+). Ligates lysine onto the cytidine present at position 34 of the AUA codon-specific tRNA(Ile) that contains the anticodon CAU, in an ATP-dependent manner. Cytidine is converted to lysidine, thus changing the amino acid specificity of the tRNA from methionine to isoleucine. The protein is tRNA(Ile)-lysidine synthase of Hydrogenovibrio crunogenus (strain DSM 25203 / XCL-2) (Thiomicrospira crunogena).